We begin with the raw amino-acid sequence, 380 residues long: Protein-tyrosine sulfotransferase A (380 aa).

At 1-6 the chain is on the cytoplasmic side; the sequence is MRKNRE. The helical; Signal-anchor for type II membrane protein transmembrane segment at 7–27 threads the bilayer; the sequence is LLLVLFLVVFILFYFITARTA. Residues 28–380 lie on the Lumenal side of the membrane; sequence DDPYYSNHRE…PIVDNEVSKL (353 aa). N66 carries N-linked (GlcNAc...) asparagine glycosylation. 79–83 provides a ligand contact to 3'-phosphoadenylyl sulfate; that stretch reads RSGTT. C97 and C157 are disulfide-bonded. The active-site Proton donor/acceptor is E100. The interaction with peptide substrate stretch occupies residues 102-106; sequence RVIPR. Residues R184, S192, and R196 each coordinate 3'-phosphoadenylyl sulfate. A disulfide bond links C226 and C234. Residues Y239, 284-293, and K299 each bind 3'-phosphoadenylyl sulfate; that span reads SSDQVVKPVN.

It belongs to the protein sulfotransferase family.

It localises to the golgi apparatus membrane. The enzyme catalyses L-tyrosyl-[protein] + 3'-phosphoadenylyl sulfate = O-sulfo-L-tyrosine-[protein] + adenosine 3',5'-bisphosphate + H(+). Functionally, catalyzes the O-sulfation of tyrosine residues within acidic motifs of polypeptides, using 3'-phosphoadenylyl sulfate (PAPS) as cosubstrate. This chain is Protein-tyrosine sulfotransferase A (tpst-1), found in Caenorhabditis elegans.